Consider the following 362-residue polypeptide: Type-2 angiotensin II receptor (362 aa).

Residues 1–44 (MKANFSLATISKNITSSLHVGFVNISSNESTFNCSHKPSDKHLD) lie on the Extracellular side of the membrane. Residues Asn4, Asn13, Asn24, Asn28, and Asn33 are each glycosylated (N-linked (GlcNAc...) asparagine). 2 disulfide bridges follow: Cys34–Cys289 and Cys116–Cys194. The helical transmembrane segment at 45-69 (AIPVLYYIIFGVGFLVNTIVVTLFC) threads the bilayer. Residues 70-79 (CQKGPKKVSS) lie on the Cytoplasmic side of the membrane. Residues 80–103 (IYIFNLAVADLLLLATLPLWATYY) form a helical membrane-spanning segment. Residues Tyr102 and Tyr103 each contribute to the angiotensin II site. Over 104 to 113 (SHRYDWIFGP) the chain is Extracellular. The chain crosses the membrane as a helical span at residues 114–139 (VMCKVFGSFLTLNMFASIFFITCMSV). The Cytoplasmic portion of the chain corresponds to 140–158 (DRYQSVIYPFLSQRRNPWQ). The helical transmembrane segment at 159-180 (ASYIVPLVWCMACLSSLPTFYF) threads the bilayer. Angiotensin II contacts are provided by Arg181, Tyr203, and Lys214. Topologically, residues 181 to 205 (RDVRTIEYLGVNACIMAFPPEKYAQ) are extracellular. The chain crosses the membrane as a helical span at residues 206-231 (WSAGIALMKNILGFIIPLIFIATCYF). Over 232 to 256 (GIRKHLLKTNSYGKNRITRDQVLKM) the chain is Cytoplasmic. A helical transmembrane segment spans residues 257–280 (AAAVVLAFIICWLPFHVLTFLDAL). Residue Asp278 participates in angiotensin II binding. Topologically, residues 281 to 293 (AWMGVINSCEVIA) are extracellular. A helical membrane pass occupies residues 294-319 (VIDLALPFAILLGFTNSCINPFLYCF). Asp296 provides a ligand contact to angiotensin II. The Cytoplasmic portion of the chain corresponds to 320-362 (VGNRFQQKLRRVFRVPITWLQGKRENGSCGKSSSFREMETFVS). Residues 323 to 332 (RFQQKLRRVF) are helix VIII.

This sequence belongs to the G-protein coupled receptor 1 family. Interacts with MTUS1.

The protein resides in the cell membrane. In terms of biological role, receptor for angiotensin II, a vasoconstricting peptide. Signals primarily via a non-canonical G-protein- and beta-arrestin independent pathways. Cooperates with MTUS1 to inhibit ERK2 activation and cell proliferation. In Ovis aries (Sheep), this protein is Type-2 angiotensin II receptor (AGTR2).